Here is a 134-residue protein sequence, read N- to C-terminus: Ribosome-binding factor A (134 aa).

This sequence belongs to the RbfA family. As to quaternary structure, monomer. Binds 30S ribosomal subunits, but not 50S ribosomal subunits or 70S ribosomes.

The protein localises to the cytoplasm. One of several proteins that assist in the late maturation steps of the functional core of the 30S ribosomal subunit. Associates with free 30S ribosomal subunits (but not with 30S subunits that are part of 70S ribosomes or polysomes). Required for efficient processing of 16S rRNA. May interact with the 5'-terminal helix region of 16S rRNA. This Rhizobium leguminosarum bv. trifolii (strain WSM2304) protein is Ribosome-binding factor A.